The sequence spans 189 residues: Elongation factor P (189 aa).

Lys-34 is subject to N6-(3,6-diaminohexanoyl)-5-hydroxylysine.

The protein belongs to the elongation factor P family. Post-translationally, may be beta-lysylated on the epsilon-amino group of Lys-34 by the combined action of EpmA and EpmB, and then hydroxylated on the C5 position of the same residue by EpmC (if this protein is present). Lysylation is critical for the stimulatory effect of EF-P on peptide-bond formation. The lysylation moiety may extend toward the peptidyltransferase center and stabilize the terminal 3-CCA end of the tRNA. Hydroxylation of the C5 position on Lys-34 may allow additional potential stabilizing hydrogen-bond interactions with the P-tRNA.

Its subcellular location is the cytoplasm. It functions in the pathway protein biosynthesis; polypeptide chain elongation. Functionally, involved in peptide bond synthesis. Alleviates ribosome stalling that occurs when 3 or more consecutive Pro residues or the sequence PPG is present in a protein, possibly by augmenting the peptidyl transferase activity of the ribosome. Modification of Lys-34 is required for alleviation. The protein is Elongation factor P of Teredinibacter turnerae (strain ATCC 39867 / T7901).